The primary structure comprises 319 residues: rRNA adenine N-6-methyltransferase (319 aa).

The tract at residues 1-59 (MARAPRSPHPARSRETSRAHPPYGTRADRAPGRGRDRDRSPDSPGNTSSRDGGRSPDRA) is disordered. The segment covering 26-41 (RADRAPGRGRDRDRSP) has biased composition (basic and acidic residues). Residues asparagine 66, leucine 68, glycine 93, glutamate 114, aspartate 141, and asparagine 157 each coordinate S-adenosyl-L-methionine.

It belongs to the class I-like SAM-binding methyltransferase superfamily. rRNA adenine N(6)-methyltransferase family.

The catalysed reaction is adenosine(2085) in 23S rRNA + 2 S-adenosyl-L-methionine = N(6)-dimethyladenosine(2085) in 23S rRNA + 2 S-adenosyl-L-homocysteine + 2 H(+). Functionally, this protein produces a dimethylation of the adenine residue at position 2085 in 23S rRNA, resulting in reduced affinity between ribosomes and macrolide-lincosamide-streptogramin B antibiotics. In Streptomyces fradiae (Streptomyces roseoflavus), this protein is rRNA adenine N-6-methyltransferase (ermSF).